The chain runs to 707 residues: MAEEISDLHDVRNIGIMAHIDAGKTTTTERILFYTGKNYKIGETHDGASTMDFMAQEQERGITIQSAATTCFWSRQSHDTKDKFQINIIDTPGHVDFTAEVERSLRVLDGAVAVFDGKEGVEPQSETVWRQADKYGVPRICFINKMDKLGANFYYSVDTIKEKLGATPIVMQLPIGSENDFTGVVDLVEMQAYVWNGTEELGAKYDTTEIPDDLKDKAQEYHEKLVEAAAEADDDLMNKFFEDGDLSKEDIRAGVRKLTIAKEAFPIFCGSAFKDKGVQPMLDGVVDYLPSPEDVPAIKGYKPGDESVEIDRHPVKSDPFAALVFKISTHPFYGKLVFVRVYSGSVVPGDSVLDSTREKKERIGKIFQMHADKENPMDRADAGNIYTFVGLKNVTTGDTLCAIDDPITLDSMTFPDPVIQVAVEPKTKADQEKMGIALSKLAEEDPTFQVTTDEESGQTLIAGMGELQLDIIVDRMRREFKVECNQGKPQVAYRETIRKAVMDQGYTHKKQTGGSGQFAKVLMNFEPLDTTEGKTFEFENKVTGGHISAEFIGPIEAGVKEAMESGVLAGFPVVGVKATVTDGQMHPVDSSEMAFKLAGSMCFKEAAPKAKPVILEPIMKVEVRTPEEYMGEVIGDLNQRRGNIQSMTDGVGVKVIDAKVPLSEMFGYIGDLRSKTQGRAMFTMEMDSYDEVPKSVSEEIIKAQRGE.

One can recognise a tr-type G domain in the interval 9 to 293 (HDVRNIGIMA…GVVDYLPSPE (285 aa)). GTP is bound by residues 18 to 25 (AHIDAGKT), 90 to 94 (DTPGH), and 144 to 147 (NKMD).

It belongs to the TRAFAC class translation factor GTPase superfamily. Classic translation factor GTPase family. EF-G/EF-2 subfamily.

It localises to the cytoplasm. Its function is as follows. Catalyzes the GTP-dependent ribosomal translocation step during translation elongation. During this step, the ribosome changes from the pre-translocational (PRE) to the post-translocational (POST) state as the newly formed A-site-bound peptidyl-tRNA and P-site-bound deacylated tRNA move to the P and E sites, respectively. Catalyzes the coordinated movement of the two tRNA molecules, the mRNA and conformational changes in the ribosome. In Bifidobacterium longum (strain DJO10A), this protein is Elongation factor G.